The following is a 110-amino-acid chain: Insulin (110 aa).

Positions 1–24 are cleaved as a signal peptide; that stretch reads MALWMRLLPLLALLALWGPDPAQA. Intrachain disulfides connect Cys-31-Cys-96, Cys-43-Cys-109, and Cys-95-Cys-100. Residues 57–87 constitute a propeptide, c peptide; sequence EAEDLQVGQVELGGGPGAGSLQPLALEGSLQ.

Belongs to the insulin family. Heterodimer of a B chain and an A chain linked by two disulfide bonds.

Its subcellular location is the secreted. Functionally, insulin decreases blood glucose concentration. It increases cell permeability to monosaccharides, amino acids and fatty acids. It accelerates glycolysis, the pentose phosphate cycle, and glycogen synthesis in liver. In Pongo pygmaeus (Bornean orangutan), this protein is Insulin (INS).